Reading from the N-terminus, the 492-residue chain is Cytochrome P450 2L1 (492 aa).

Cys436 provides a ligand contact to heme.

This sequence belongs to the cytochrome P450 family. Requires heme as cofactor.

The protein localises to the endoplasmic reticulum membrane. The protein resides in the microsome membrane. The catalysed reaction is an organic molecule + reduced [NADPH--hemoprotein reductase] + O2 = an alcohol + oxidized [NADPH--hemoprotein reductase] + H2O + H(+). In terms of biological role, efficient in catalyzing the monooxygenation of benzphetamine, aminopyrine, benzo(a)pyrene, progesterone, and testosterone. The sequence is that of Cytochrome P450 2L1 (CYP2L1) from Panulirus argus (Caribbean spiny lobster).